Consider the following 440-residue polypeptide: Ferredoxin--NADP reductase (440 aa).

The 59-residue stretch at 17–75 folds into the CpcD-like domain; sequence SRVFVYEVVGMRQNEETDQTNYPIRKSGSVFIRVPYNRMNQEMQRITRLGGKIVSIQTV. Residues 93 to 142 form a disordered region; it reads ASSETAKSEGNGKATPVKTDSGAKGFAKPPAEEQLKKKDNKGNTMTQAKA. The span at 122-133 shows a compositional bias: basic and acidic residues; sequence PAEEQLKKKDNK. The region spanning 155 to 279 is the FAD-binding FR-type domain; it reads NAPFIGKVIS…TGPVGKEMLL (125 aa). Residues 214-217, 235-237, tyrosine 241, 253-255, and threonine 294 each bind FAD; these read RLYS, CVR, and VCS. 2 residues coordinate NADP(+): serine 217 and arginine 237. Residues threonine 294, 330–331, 360–361, 370–374, 399–400, and glutamate 438 each bind NADP(+); these read VP, SR, RMYIQ, and GL.

The protein belongs to the ferredoxin--NADP reductase type 1 family. FAD is required as a cofactor.

The protein resides in the cellular thylakoid membrane. The catalysed reaction is 2 reduced [2Fe-2S]-[ferredoxin] + NADP(+) + H(+) = 2 oxidized [2Fe-2S]-[ferredoxin] + NADPH. The protein is Ferredoxin--NADP reductase (petH) of Trichormus variabilis (strain ATCC 29413 / PCC 7937) (Anabaena variabilis).